Here is a 217-residue protein sequence, read N- to C-terminus: Large ribosomal subunit protein uL3 (217 aa).

Residues 127 to 162 are disordered; it reads GFSRGPMSHGSKNHRAPGSTGAGTTPGRIYPGKRMA. Positions 142–153 are enriched in low complexity; sequence APGSTGAGTTPG.

This sequence belongs to the universal ribosomal protein uL3 family. Part of the 50S ribosomal subunit. Forms a cluster with proteins L14 and L19.

In terms of biological role, one of the primary rRNA binding proteins, it binds directly near the 3'-end of the 23S rRNA, where it nucleates assembly of the 50S subunit. The sequence is that of Large ribosomal subunit protein uL3 from Prochlorococcus marinus (strain MIT 9301).